The chain runs to 311 residues: Fucose-specific lectin (311 aa).

6 repeat units span residues Met-1–Ile-53, Ala-54–Lys-103, Phe-104–Asn-151, Leu-152–Ala-209, Pro-210–Thr-256, and Ile-257–Glu-311. The 6 X approximate tandem repeats stretch occupies residues Met-1 to Glu-311. Beta-L-fucose contacts are provided by Arg-25, Glu-37, Trp-44, Arg-73, Glu-85, Trp-94, Arg-126, Glu-138, Trp-146, Arg-177, Gln-189, Trp-198, Arg-230, Gln-242, Arg-277, and Glu-291.

Belongs to the fungal fucose-specific lectin family. As to quaternary structure, homodimer.

Functionally, lectin that specifically binds to L-fucose and weakly reacts with mannose and N-acetyl-neuraminic acid. Has strongest preference for the alpha-1,6-fucosylated chain (core fucose) on glycoproteins among alpha-1,2-, alpha-1,3-, alpha-1,4-, and alpha-1,6-fucosylated chains. Binds to fucose residues of IgE in mice and human, causing antigen-independent IgE-mediated mast cell activation and anaphylactoid reactions in mice and is possibly implicated in allergic response to Aspergillus oryzae in humans. Induces secretion of pro-inflammatory cytokines IL6 and IL8 implicated in ocular diseases such as mycotic keratitis, probably through its interaction with host toll-like receptors TLR2 and TLR4, followed by up-regulation of pro-inflammatory cytokines. This is Fucose-specific lectin from Aspergillus oryzae (strain ATCC 42149 / RIB 40) (Yellow koji mold).